Consider the following 98-residue polypeptide: MSSYLTIIISFFYLGILGILLNRLHLLSILLCFELLLISLFIWICNTLFKTFNNLILSNNLILLTLSACEASAGLSLMVALSRTHNSDLVSSMNILQQ.

Helical transmembrane passes span 1–21, 24–44, and 61–81; these read MSSY…GILL, LHLL…FIWI, and LILL…MVAL.

The protein belongs to the complex I subunit 4L family.

Its subcellular location is the mitochondrion membrane. The catalysed reaction is a ubiquinone + NADH + 5 H(+)(in) = a ubiquinol + NAD(+) + 4 H(+)(out). Functionally, core subunit of the mitochondrial membrane respiratory chain NADH dehydrogenase (Complex I) that is believed to belong to the minimal assembly required for catalysis. Complex I functions in the transfer of electrons from NADH to the respiratory chain. The immediate electron acceptor for the enzyme is believed to be ubiquinone. This chain is NADH-ubiquinone oxidoreductase chain 4L (ND4L), found in Pisaster ochraceus (Ochre sea star).